We begin with the raw amino-acid sequence, 299 residues long: Virginiamycin B lyase (299 aa).

Residue histidine 229 participates in substrate binding. Glutamate 269 is a binding site for Mg(2+). Histidine 271 serves as the catalytic Proton acceptor. Position 286 (glutamate 286) interacts with Mg(2+).

Belongs to the Vgb family. Monomer. Requires Mg(2+) as cofactor.

Functionally, inactivates the type B streptogramin antibiotics by linearizing the lactone ring at the ester linkage, generating a free phenylglycine carboxylate and converting the threonyl moiety into 2-amino-butenoic acid. The sequence is that of Virginiamycin B lyase from Bordetella bronchiseptica (strain ATCC BAA-588 / NCTC 13252 / RB50) (Alcaligenes bronchisepticus).